The following is a 432-amino-acid chain: MSQYMMVAVAAVVAVAGSSQISRRSTGGTQEQEILNELLSNYDMRVRPPPSNYSDPMGPVTVRVNIMIRMLSKIDVVNMEYSMQLTFREQWLDSRLAYAHLGYHNPPKFLTVPHIKSNLWIPDTFFPTEKAAHRHLIDTDNMFLRIHPDGKVLYSSRISITSSCHMQLQLYPLDLQFCDFDLVSYAHTMKDIVYEWDPLAPVQLKPGVGSDLPNFQLTNITTNDDCTSHTNTGSYACLRMQLTLKRQFSYYLVQLYGPTTMIVIVSWVSFWIDMHSTAGRVALGVTTLLTMTTMQAAINAKLPPVSYVKVVDVWLGACQTFVFGALLEYAFVSYQDSQRQTEQAKSRAARKAQKRRAKMELVEREQYQPPCTCHLYQDYEPSFRDRLRRYFTKPDYLPAKIDYYARFCVPLGFLAFNAIYWTSCLVMVSRLV.

The first 18 residues, 1-18 (MSQYMMVAVAAVVAVAGS), serve as a signal peptide directing secretion. Residues 19-249 (SQISRRSTGG…MQLTLKRQFS (231 aa)) lie on the Extracellular side of the membrane. A glycan (N-linked (GlcNAc...) asparagine) is linked at asparagine 52. The L-glutamate site is built by arginine 69, arginine 88, and serine 155. A disulfide bond links cysteine 164 and cysteine 178. Serine 184 is an L-glutamate binding site. An N-linked (GlcNAc...) asparagine glycan is attached at asparagine 219. Cysteine 226 and cysteine 237 are joined by a disulfide. Residues 250–272 (YYLVQLYGPTTMIVIVSWVSFWI) form a helical membrane-spanning segment. Over 273-277 (DMHST) the chain is Cytoplasmic. A helical membrane pass occupies residues 278–299 (AGRVALGVTTLLTMTTMQAAIN). Topologically, residues 300–306 (AKLPPVS) are extracellular. Residues 307–327 (YVKVVDVWLGACQTFVFGALL) form a helical membrane-spanning segment. The Cytoplasmic portion of the chain corresponds to 328–402 (EYAFVSYQDS…KPDYLPAKID (75 aa)). The helical transmembrane segment at 403–426 (YYARFCVPLGFLAFNAIYWTSCLV) threads the bilayer. Over 427–432 (MVSRLV) the chain is Extracellular.

It belongs to the ligand-gated ion channel (TC 1.A.9) family. Glutamate-gated chloride channel (TC 1.A.9.4) subfamily. In terms of assembly, pentamer. In terms of tissue distribution, expressed in motor neuron commissures at the anterior portion of the worms.

It localises to the postsynaptic cell membrane. Its subcellular location is the cell membrane. In terms of biological role, glutamate-gated chloride channel subunit; channel properties may be modulated by the formation of heteromeric channels. Glutamate binding triggers a rapidly reversible current, while the anti-helmintic drug ivermectin triggers a permanently open channel configuration. In Haemonchus contortus (Barber pole worm), this protein is Glutamate-gated chloride channel subunit beta.